The following is a 633-amino-acid chain: Threonine--tRNA ligase (633 aa).

The TGS domain maps to 1–61; it reads MINITLPDGS…DHDASLRIIT (61 aa). The tract at residues 243 to 534 is catalytic; that stretch reads DHRRIGKQQD…LIEHHAGQFP (292 aa). 3 residues coordinate Zn(2+): cysteine 334, histidine 385, and histidine 511.

It belongs to the class-II aminoacyl-tRNA synthetase family. In terms of assembly, homodimer. Zn(2+) is required as a cofactor.

The protein localises to the cytoplasm. The enzyme catalyses tRNA(Thr) + L-threonine + ATP = L-threonyl-tRNA(Thr) + AMP + diphosphate + H(+). Its function is as follows. Catalyzes the attachment of threonine to tRNA(Thr) in a two-step reaction: L-threonine is first activated by ATP to form Thr-AMP and then transferred to the acceptor end of tRNA(Thr). Also edits incorrectly charged L-seryl-tRNA(Thr). The protein is Threonine--tRNA ligase of Stenotrophomonas maltophilia (strain R551-3).